The primary structure comprises 433 residues: ATP-sensitive inward rectifier potassium channel 12 (433 aa).

Over 1–77 (MTAASRANPY…LADMFTTCVD (77 aa)) the chain is Cytoplasmic. The residue at position 75 (Cys75) is an S-nitrosocysteine. The chain crosses the membrane as a helical span at residues 78–104 (IRWRYMLLIFSLAFLASWLLFGIIFWV). A 1,2-diacyl-sn-glycero-3-phospho-(1D-myo-inositol-4,5-bisphosphate)-binding residues include Arg79 and Arg81. Over 105–129 (IAVAHGDLEPAEGRGRTPCVMQVHG) the chain is Extracellular. Residues Cys123 and Cys155 are joined by a disulfide bond. The helical; Pore-forming intramembrane region spans 130-146 (FMAAFLFSIETQTTIGY). Thr143, Ile144, Gly145, and Tyr146 together coordinate K(+). The Selectivity filter motif lies at 143-148 (TIGYGL). Over 147–155 (GLRCVTEEC) the chain is Extracellular. Residues 156-183 (PVAVFMVVAQSIVGCIIDSFMIGAIMAK) traverse the membrane as a helical segment. Positions 183 and 188 each coordinate a 1,2-diacyl-sn-glycero-3-phospho-(1D-myo-inositol-4,5-bisphosphate). Residues 184–433 (MARPKKRAQT…QRPYRRESEI (250 aa)) are Cytoplasmic-facing. The interval 387–433 (DEEDEADGDQDGRSRDGLSPQARHDFDRLQAGGGVLEQRPYRRESEI) is disordered. A compositionally biased stretch (basic and acidic residues) spans 396 to 414 (QDGRSRDGLSPQARHDFDR). The PDZ-binding signature appears at 431 to 433 (SEI).

Belongs to the inward rectifier-type potassium channel (TC 1.A.2.1) family. KCNJ12 subfamily. In terms of assembly, homotetramer. Forms heteromer with KCNJ4. Can form heteromeric channels with Kir2.6/KCNJ18. Association, via its PDZ-recognition domain, with LIN7A, LIN7B, LIN7C, DLG1, CASK and APBA1 plays a key role in its localization and trafficking.

It localises to the membrane. Its subcellular location is the cell membrane. It is found in the sarcolemma. The protein resides in the T-tubule. It catalyses the reaction K(+)(in) = K(+)(out). With respect to regulation, activated by phosphatidylinositol 4,5-biphosphate (PtdIns(4,5)P2). PtdIns(4,5)P2 binding to the cytoplasmic side of the channel triggers a conformation change leading to channel opening. Inhibited by Ba(2+). Its function is as follows. Inward rectifying potassium channel that probably participates in controlling the resting membrane potential in electrically excitable cells. Probably participates in establishing action potential waveform and excitability of neuronal and muscle tissues. Inward rectifier potassium channels are characterized by a greater tendency to allow potassium to flow into the cell rather than out of it. Their voltage dependence is regulated by the concentration of extracellular potassium; as external potassium is raised, the voltage range of the channel opening shifts to more positive voltages. The inward rectification is mainly due to the blockage of outward current by internal magnesium. The protein is ATP-sensitive inward rectifier potassium channel 12 (KCNJ12) of Homo sapiens (Human).